The primary structure comprises 506 residues: Deoxyribodipyrimidine photo-lyase (506 aa).

Over residues 1 to 21 (MPPTSVSPPRTAPGPANPSPA) the composition is skewed to pro residues. The segment at 1 to 33 (MPPTSVSPPRTAPGPANPSPAHPSRVRVIHPGG) is disordered. The Photolyase/cryptochrome alpha/beta domain occupies 38 to 171 (GPVVYWMLRD…AVHQVDAHNV (134 aa)). FAD is bound by residues tyrosine 268 and 282-285 (SGLS). Residue serine 312 is modified to Phosphoserine. Residues 319-327 (ELVVRRELA), lysine 390, asparagine 421, aspartate 427, and 427-429 (DGR) each bind FAD. The segment at 487-506 (KKRNAEESPNPVVKLSKSQH) is disordered.

Belongs to the DNA photolyase class-2 family. The cofactor is FAD. As to expression, expressed in proliferating tissues. Highly expressed in roots and shoot apical meristem (SAM). Expressed in leaves, flag leaves, and panicle.

The protein localises to the nucleus. The enzyme catalyses cyclobutadipyrimidine (in DNA) = 2 pyrimidine residues (in DNA).. Involved in repair of UV radiation-induced DNA damage. Catalyzes the light-dependent monomerization (300-600 nm) of cyclobutylpyrimidine dimers (CPDs), which are formed between adjacent bases on the same DNA strand upon exposure to ultraviolet radiation. Required for plant survival in the presence of UV-B light. Not involved in the repair of (6-4) photoproducts. In Oryza sativa subsp. japonica (Rice), this protein is Deoxyribodipyrimidine photo-lyase (PHR).